A 753-amino-acid polypeptide reads, in one-letter code: Transcription factor SOX-30 (753 aa).

2 disordered regions span residues 1-45 (MERA…TLSA) and 137-161 (AKKQKLGPSLDQSVGPRGAVETGPR). Pro residues predominate over residues 7 to 23 (EPPPQPRPLRPAPPPLP). A DNA-binding region (HMG box) is located at residues 337–405 (VKRPMNAFMV…KHREEFPGWV (69 aa)). 2 disordered regions span residues 514–575 (TGPS…SPCP) and 726–753 (PTSTPSSIQQVNVTDSDEEEEEKVLRDL). Polar residues-rich tracts occupy residues 531-563 (TVKQPTPVSLESANRISSSASTAHARFATSTIQ) and 726-739 (PTSTPSSIQQVNVT).

Interacts with CTNNB1, competitively inhibiting CTNNB1-TCF7L2/TCF4 interaction.

It localises to the nucleus. The protein resides in the cytoplasm. In terms of biological role, acts both as a transcriptional activator and a repressor. Binds to the DNA sequence 5'-ACAAT-3' and shows a preference for guanine residues surrounding this core motif. Binds to its own promoter and activates its own transcription. Required to activate the expression of postmeiotic genes involved in spermiogenesis. Binds to the promoter region of CTNNB1 and represses its transcription which leads to inhibition of Wnt signaling. Also inhibits Wnt signaling by binding to the CTNNB1 protein, preventing interaction of CTNNB1 with TCF7L2/TCF4. This chain is Transcription factor SOX-30 (SOX30), found in Homo sapiens (Human).